Consider the following 675-residue polypeptide: MAAQKKKAQDEYGAASITILEGLEAVRKRPGMYIGSTGERGLHHLIWEVVDNAVDEAMAGYATTVNVVLLEDGGVEVADDGRGIPVATHASGIPTVDVVMTQLHAGGKFDSDAYAISGGLHGVGVSVVNALSTRLEVEIKRDGYEWSQVYEKSEPLGLKQGAPTKKTGSTVRFWADPAVFETTEYDFETVARRLQEMAFLNKGLTINLTDERVTQDEVVDEVVSDVAEAPKSASERAAESTAPHKVKSRTFHYPGGLVDFVKHINRTKNAIHSSIVDFSGKGTGHEVEIAMQWNAGYSESVHTFANTINTHEGGTHEEGFRSALTSVVNKYAKDRKLLKDKDPNLTGDDIREGLAAVISVKVSEPQFEGQTKTKLGNTEVKSFVQKVCNEQLTHWFEANPTDAKVVVNKAVSSAQARIAARKARELVRRKSATDIGGLPGKLADCRSTDPRKSELYVVEGDSAGGSAKSGRDSMFQAILPLRGKIINVEKARIDRVLKNTEVQAIITALGTGIHDEFDIGKLRYHKIVLMADADVDGQHISTLLLTLLFRFMRPLIENGHVFLAQPPLYKLKWQRSDPEFAYSDRERDGLLEAGLKAGKKINKEDGIQRYKGLGEMDAKELWETTMDPSVRVLRQVTLDDAAAADELFSILMGEDVDARRSFITRNAKDVRFLDV.

The 115-residue stretch at 453-567 folds into the Toprim domain; that stretch reads SELYVVEGDS…NGHVFLAQPP (115 aa). The Mg(2+) site is built by Glu459, Asp532, and Asp534.

Belongs to the type II topoisomerase GyrB family. As to quaternary structure, heterotetramer, composed of two GyrA and two GyrB chains. In the heterotetramer, GyrA contains the active site tyrosine that forms a transient covalent intermediate with DNA, while GyrB binds cofactors and catalyzes ATP hydrolysis. Mg(2+) is required as a cofactor. The cofactor is Mn(2+). It depends on Ca(2+) as a cofactor.

It is found in the cytoplasm. The enzyme catalyses ATP-dependent breakage, passage and rejoining of double-stranded DNA.. Functionally, a type II topoisomerase that negatively supercoils closed circular double-stranded (ds) DNA in an ATP-dependent manner to modulate DNA topology and maintain chromosomes in an underwound state. Negative supercoiling favors strand separation, and DNA replication, transcription, recombination and repair, all of which involve strand separation. Also able to catalyze the interconversion of other topological isomers of dsDNA rings, including catenanes and knotted rings. Type II topoisomerases break and join 2 DNA strands simultaneously in an ATP-dependent manner. The chain is DNA gyrase subunit B from Mycobacterium tuberculosis (strain ATCC 25177 / H37Ra).